We begin with the raw amino-acid sequence, 141 residues long: Perlwapin-like protein (141 aa).

An N-terminal signal peptide occupies residues 1–19 (MNVYFILFLGVFAFIEVNC). The 49-residue stretch at 23-71 (KSKSLGTCPKLDVSTVCVVDYKFNCLFQKQCPSGYRCCTYGCNRRCAAV) folds into the WAP domain. 6 cysteine pairs are disulfide-bonded: cysteine 30-cysteine 60, cysteine 39-cysteine 64, cysteine 47-cysteine 59, cysteine 53-cysteine 68, cysteine 81-cysteine 105, and cysteine 92-cysteine 104.

As to expression, component of the organic matrix of calcified shell layers like nacre and prisms.

The protein resides in the secreted. The polypeptide is Perlwapin-like protein (Mytilus galloprovincialis (Mediterranean mussel)).